The following is a 338-amino-acid chain: Egl nine homolog 1 (338 aa).

Positions 1–11 are enriched in low complexity; it reads PRAQPAPAQPR. Positions 1–99 are disordered; the sequence is PRAQPAPAQP…PSGGLRPNGQ (99 aa). Position 52 is a phosphoserine (Ser52). Residues Cys116 and Cys123 each carry the S-nitrosocysteine modification. The interval 156 to 166 is beta(2)beta(3) 'finger-like' loop; the sequence is VSQKSDSSKDI. The Fe2OG dioxygenase domain maps to 209–307; the sequence is GRTKAMVACY…RYAITVWYFD (99 aa). Cys217 bears the S-nitrosocysteine mark. His228 and Asp230 together coordinate Fe cation. Residues Cys238 and Cys241 each carry the S-nitrosocysteine modification. His289 contacts Fe cation. Residue Arg298 coordinates 2-oxoglutarate.

As to quaternary structure, monomer. Interacts with ING4; the interaction inhibits the hydroxylation of HIF alpha proteins. Interacts with PTGES3 (via PXLE motif); thereby recruiting EGLN1 to the HSP90 pathway to facilitate HIF alpha proteins hydroxylation. Interacts with LIMD1. Found in a complex composed of LIMD1, VHL, EGLN1/PHD2, ELOB and CUL2. Interacts with EPAS1. Interacts with CBFA2T3 and HIF1A. It depends on Fe(2+) as a cofactor. Requires L-ascorbate as cofactor. In terms of processing, S-nitrosylation inhibits the enzyme activity up to 60% under aerobic conditions. Chelation of Fe(2+) has no effect on the S-nitrosylation. It is uncertain whether nitrosylation occurs on Cys-238 or Cys-241. As to expression, expressed in heart, liver, kidney, brain, liver and testis. Highest levels in heart, lowest in liver.

It localises to the cytoplasm. Its subcellular location is the nucleus. It catalyses the reaction L-prolyl-[hypoxia-inducible factor alpha subunit] + 2-oxoglutarate + O2 = trans-4-hydroxy-L-prolyl-[hypoxia-inducible factor alpha subunit] + succinate + CO2. Increased activation in hypoxia. Hydroxylation of the C-terminal ODD domain (CODD) proline of HIF1A is activated by cyclosporin A (CsA). Cellular oxygen sensor that catalyzes, under normoxic conditions, the post-translational formation of 4-hydroxyproline in hypoxia-inducible factor (HIF) alpha proteins. Hydroxylates a specific proline found in each of the oxygen-dependent degradation (ODD) domains (N-terminal, NODD, and C-terminal, CODD) of HIF1A. Also hydroxylates HIF2A. Has a preference for the CODD site for both HIF1A and HIF1B. Hydroxylated HIFs are then targeted for proteasomal degradation via the von Hippel-Lindau ubiquitination complex. Under hypoxic conditions, the hydroxylation reaction is attenuated allowing HIFs to escape degradation resulting in their translocation to the nucleus, heterodimerization with HIF1B, and increased expression of hypoxy-inducible genes. EGLN1 is the most important isozyme under normoxia and, through regulating the stability of HIF1, involved in various hypoxia-influenced processes such as angiogenesis in retinal and cardiac functionality. Target proteins are preferentially recognized via a LXXLAP motif. The chain is Egl nine homolog 1 (Egln1) from Rattus norvegicus (Rat).